Reading from the N-terminus, the 186-residue chain is Glutathione peroxidase 7 (186 aa).

Positions 1–18 (MVAARAAAWLLLAAAACA) are cleaved as a signal peptide. The active site involves C56.

It belongs to the glutathione peroxidase family.

It is found in the secreted. The enzyme catalyses 2 glutathione + H2O2 = glutathione disulfide + 2 H2O. The polypeptide is Glutathione peroxidase 7 (GPX7) (Bos taurus (Bovine)).